Here is a 209-residue protein sequence, read N- to C-terminus: Thiamine-phosphate synthase (209 aa).

Residues 38-42 and asparagine 70 contribute to the 4-amino-2-methyl-5-(diphosphooxymethyl)pyrimidine site; that span reads QLREK. Aspartate 71 and aspartate 90 together coordinate Mg(2+). Residue serine 109 participates in 4-amino-2-methyl-5-(diphosphooxymethyl)pyrimidine binding. 135–137 is a binding site for 2-[(2R,5Z)-2-carboxy-4-methylthiazol-5(2H)-ylidene]ethyl phosphate; it reads TPT. Lysine 138 contacts 4-amino-2-methyl-5-(diphosphooxymethyl)pyrimidine. 2-[(2R,5Z)-2-carboxy-4-methylthiazol-5(2H)-ylidene]ethyl phosphate is bound by residues glycine 166 and 186-187; that span reads IS.

This sequence belongs to the thiamine-phosphate synthase family. The cofactor is Mg(2+).

The catalysed reaction is 2-[(2R,5Z)-2-carboxy-4-methylthiazol-5(2H)-ylidene]ethyl phosphate + 4-amino-2-methyl-5-(diphosphooxymethyl)pyrimidine + 2 H(+) = thiamine phosphate + CO2 + diphosphate. It carries out the reaction 2-(2-carboxy-4-methylthiazol-5-yl)ethyl phosphate + 4-amino-2-methyl-5-(diphosphooxymethyl)pyrimidine + 2 H(+) = thiamine phosphate + CO2 + diphosphate. The enzyme catalyses 4-methyl-5-(2-phosphooxyethyl)-thiazole + 4-amino-2-methyl-5-(diphosphooxymethyl)pyrimidine + H(+) = thiamine phosphate + diphosphate. It participates in cofactor biosynthesis; thiamine diphosphate biosynthesis; thiamine phosphate from 4-amino-2-methyl-5-diphosphomethylpyrimidine and 4-methyl-5-(2-phosphoethyl)-thiazole: step 1/1. Its function is as follows. Condenses 4-methyl-5-(beta-hydroxyethyl)thiazole monophosphate (THZ-P) and 2-methyl-4-amino-5-hydroxymethyl pyrimidine pyrophosphate (HMP-PP) to form thiamine monophosphate (TMP). In Syntrophomonas wolfei subsp. wolfei (strain DSM 2245B / Goettingen), this protein is Thiamine-phosphate synthase.